The following is a 249-amino-acid chain: 2,3-bisphosphoglycerate-dependent phosphoglycerate mutase 2 (249 aa).

Substrate-binding positions include 8–15 (RHGESIWN), 21–22 (TG), Arg-60, 87–90 (ERHY), Lys-98, 114–115 (RR), and 183–184 (GN). The active-site Tele-phosphohistidine intermediate is His-9. Glu-87 (proton donor/acceptor) is an active-site residue.

Belongs to the phosphoglycerate mutase family. BPG-dependent PGAM subfamily. Homodimer.

The enzyme catalyses (2R)-2-phosphoglycerate = (2R)-3-phosphoglycerate. Its pathway is carbohydrate degradation; glycolysis; pyruvate from D-glyceraldehyde 3-phosphate: step 3/5. In terms of biological role, catalyzes the interconversion of 2-phosphoglycerate and 3-phosphoglycerate. This Nitrosomonas europaea (strain ATCC 19718 / CIP 103999 / KCTC 2705 / NBRC 14298) protein is 2,3-bisphosphoglycerate-dependent phosphoglycerate mutase 2.